A 128-amino-acid chain; its full sequence is Keratin-associated protein 21-1 (128 aa).

Residues 11–117 (GGCGYGSRYG…RYGCGYGSGC (107 aa)) form a 51 X 2 AA repeats of G-[YCGS] region.

The protein belongs to the KRTAP type 21 family. In terms of assembly, interacts with hair keratins. As to expression, strong expression in narrowly defined pattern restricted to the lower and middle cortical regions of the hair shaft in both developing and cycling hair. During hair follicle regression (catagen), expression levels decrease until expression is no longer detectable in follicles at resting stage (telogen).

In terms of biological role, in the hair cortex, hair keratin intermediate filaments are embedded in an interfilamentous matrix, consisting of hair keratin-associated proteins (KRTAP), which are essential for the formation of a rigid and resistant hair shaft through their extensive disulfide bond cross-linking with abundant cysteine residues of hair keratins. The matrix proteins include the high-sulfur and high-glycine-tyrosine keratins. The chain is Keratin-associated protein 21-1 (Krtap21-1) from Mus musculus (Mouse).